The primary structure comprises 450 residues: Bifunctional protein GlmU (450 aa).

Residues 1-228 (MKTALVILAA…ESETLGINSR (228 aa)) are pyrophosphorylase. UDP-N-acetyl-alpha-D-glucosamine-binding positions include 8-11 (LAAG), K22, Q75, and 80-81 (GT). Residue D105 participates in Mg(2+) binding. 4 residues coordinate UDP-N-acetyl-alpha-D-glucosamine: G140, E154, N169, and N226. N226 contacts Mg(2+). The linker stretch occupies residues 229-249 (TELSAAEAAFQERARTNAFEN). Positions 250–450 (GVTLPAPGTV…AKKAKQQRGS (201 aa)) are N-acetyltransferase. UDP-N-acetyl-alpha-D-glucosamine contacts are provided by R315 and K333. H345 (proton acceptor) is an active-site residue. The UDP-N-acetyl-alpha-D-glucosamine site is built by Y348 and N359. Residues A362, 368–369 (NY), S387, S405, and R422 contribute to the acetyl-CoA site.

This sequence in the N-terminal section; belongs to the N-acetylglucosamine-1-phosphate uridyltransferase family. The protein in the C-terminal section; belongs to the transferase hexapeptide repeat family. Homotrimer. Mg(2+) is required as a cofactor.

Its subcellular location is the cytoplasm. It carries out the reaction alpha-D-glucosamine 1-phosphate + acetyl-CoA = N-acetyl-alpha-D-glucosamine 1-phosphate + CoA + H(+). The enzyme catalyses N-acetyl-alpha-D-glucosamine 1-phosphate + UTP + H(+) = UDP-N-acetyl-alpha-D-glucosamine + diphosphate. It participates in nucleotide-sugar biosynthesis; UDP-N-acetyl-alpha-D-glucosamine biosynthesis; N-acetyl-alpha-D-glucosamine 1-phosphate from alpha-D-glucosamine 6-phosphate (route II): step 2/2. It functions in the pathway nucleotide-sugar biosynthesis; UDP-N-acetyl-alpha-D-glucosamine biosynthesis; UDP-N-acetyl-alpha-D-glucosamine from N-acetyl-alpha-D-glucosamine 1-phosphate: step 1/1. The protein operates within bacterial outer membrane biogenesis; LPS lipid A biosynthesis. Its function is as follows. Catalyzes the last two sequential reactions in the de novo biosynthetic pathway for UDP-N-acetylglucosamine (UDP-GlcNAc). The C-terminal domain catalyzes the transfer of acetyl group from acetyl coenzyme A to glucosamine-1-phosphate (GlcN-1-P) to produce N-acetylglucosamine-1-phosphate (GlcNAc-1-P), which is converted into UDP-GlcNAc by the transfer of uridine 5-monophosphate (from uridine 5-triphosphate), a reaction catalyzed by the N-terminal domain. The protein is Bifunctional protein GlmU of Roseobacter denitrificans (strain ATCC 33942 / OCh 114) (Erythrobacter sp. (strain OCh 114)).